The primary structure comprises 197 residues: ATP-dependent Clp protease proteolytic subunit (197 aa).

The active-site Nucleophile is serine 98. Histidine 123 is a catalytic residue.

It belongs to the peptidase S14 family. Fourteen ClpP subunits assemble into 2 heptameric rings which stack back to back to give a disk-like structure with a central cavity, resembling the structure of eukaryotic proteasomes.

It is found in the cytoplasm. It carries out the reaction Hydrolysis of proteins to small peptides in the presence of ATP and magnesium. alpha-casein is the usual test substrate. In the absence of ATP, only oligopeptides shorter than five residues are hydrolyzed (such as succinyl-Leu-Tyr-|-NHMec, and Leu-Tyr-Leu-|-Tyr-Trp, in which cleavage of the -Tyr-|-Leu- and -Tyr-|-Trp bonds also occurs).. Functionally, cleaves peptides in various proteins in a process that requires ATP hydrolysis. Has a chymotrypsin-like activity. Plays a major role in the degradation of misfolded proteins. This Natranaerobius thermophilus (strain ATCC BAA-1301 / DSM 18059 / JW/NM-WN-LF) protein is ATP-dependent Clp protease proteolytic subunit.